Consider the following 316-residue polypeptide: Spermidine synthase (316 aa).

The region spanning Pro25 to Thr262 is the PABS domain. Gln56 contributes to the S-adenosyl 3-(methylsulfanyl)propylamine binding site. Tyr86 contacts putrescine. Residues Gln87, Asp111, Glu131, Asp162–Gly163, and Asp181 contribute to the S-adenosyl 3-(methylsulfanyl)propylamine site. Asp181 (proton acceptor) is an active-site residue. Residues Asp181–Asp184 and Tyr250 each bind putrescine.

The protein belongs to the spermidine/spermine synthase family.

It carries out the reaction S-adenosyl 3-(methylsulfanyl)propylamine + putrescine = S-methyl-5'-thioadenosine + spermidine + H(+). Its pathway is amine and polyamine biosynthesis; spermidine biosynthesis; spermidine from putrescine: step 1/1. The polypeptide is Spermidine synthase (Coffea arabica (Arabian coffee)).